A 118-amino-acid chain; its full sequence is UPF0212 protein HQ_2663A (118 aa).

It belongs to the UPF0212 family.

This is UPF0212 protein HQ_2663A from Haloquadratum walsbyi (strain DSM 16790 / HBSQ001).